The chain runs to 461 residues: Cysteine--tRNA ligase (461 aa).

A Zn(2+)-binding site is contributed by Cys-30. A 'HIGH' region motif is present at residues 32 to 42 (VTIYDLCHIGH). Cys-211, His-236, and Glu-240 together coordinate Zn(2+). The short motif at 268 to 272 (KMSKS) is the 'KMSKS' region element. Lys-271 contacts ATP.

It belongs to the class-I aminoacyl-tRNA synthetase family. As to quaternary structure, monomer. Zn(2+) is required as a cofactor.

It localises to the cytoplasm. The enzyme catalyses tRNA(Cys) + L-cysteine + ATP = L-cysteinyl-tRNA(Cys) + AMP + diphosphate. This chain is Cysteine--tRNA ligase, found in Shewanella putrefaciens (strain CN-32 / ATCC BAA-453).